A 193-amino-acid polypeptide reads, in one-letter code: Large ribosomal subunit protein bL25 (193 aa).

Belongs to the bacterial ribosomal protein bL25 family. CTC subfamily. In terms of assembly, part of the 50S ribosomal subunit; part of the 5S rRNA/L5/L18/L25 subcomplex. Contacts the 5S rRNA. Binds to the 5S rRNA independently of L5 and L18.

This is one of the proteins that binds to the 5S RNA in the ribosome where it forms part of the central protuberance. This is Large ribosomal subunit protein bL25 from Clostridium tetani (strain Massachusetts / E88).